Here is a 484-residue protein sequence, read N- to C-terminus: tRNA sulfurtransferase (484 aa).

The THUMP domain maps to 61–166 (PHLIELLQCI…DKLLFIQARH (106 aa)). Residues 183-184 (LI), lysine 265, glycine 287, and glutamine 296 contribute to the ATP site. Residues cysteine 344 and cysteine 456 are joined by a disulfide bond. Residues 404 to 483 (LGENDVILDI…FNNVQVFVKA (80 aa)) form the Rhodanese domain. The active-site Cysteine persulfide intermediate is cysteine 456.

It belongs to the ThiI family.

The protein resides in the cytoplasm. It catalyses the reaction [ThiI sulfur-carrier protein]-S-sulfanyl-L-cysteine + a uridine in tRNA + 2 reduced [2Fe-2S]-[ferredoxin] + ATP + H(+) = [ThiI sulfur-carrier protein]-L-cysteine + a 4-thiouridine in tRNA + 2 oxidized [2Fe-2S]-[ferredoxin] + AMP + diphosphate. The enzyme catalyses [ThiS sulfur-carrier protein]-C-terminal Gly-Gly-AMP + S-sulfanyl-L-cysteinyl-[cysteine desulfurase] + AH2 = [ThiS sulfur-carrier protein]-C-terminal-Gly-aminoethanethioate + L-cysteinyl-[cysteine desulfurase] + A + AMP + 2 H(+). It functions in the pathway cofactor biosynthesis; thiamine diphosphate biosynthesis. Its function is as follows. Catalyzes the ATP-dependent transfer of a sulfur to tRNA to produce 4-thiouridine in position 8 of tRNAs, which functions as a near-UV photosensor. Also catalyzes the transfer of sulfur to the sulfur carrier protein ThiS, forming ThiS-thiocarboxylate. This is a step in the synthesis of thiazole, in the thiamine biosynthesis pathway. The sulfur is donated as persulfide by IscS. The sequence is that of tRNA sulfurtransferase from Actinobacillus succinogenes (strain ATCC 55618 / DSM 22257 / CCUG 43843 / 130Z).